A 141-amino-acid polypeptide reads, in one-letter code: Large ribosomal subunit protein uL6 (141 aa).

Belongs to the universal ribosomal protein uL6 family.

In Haemonchus contortus (Barber pole worm), this protein is Large ribosomal subunit protein uL6.